Consider the following 921-residue polypeptide: MSTNEQLAWDFDDGDVAEVRPDTGIARFAPGSEQWIAALQPTDDDAIRLDRFDVNTMTAEAAARLWARVAAWVESDQIAYYIDDSPVSSDAAYDARMRCLERLEAAFPSLDNPQSPTHRVGGSFSNDFVSVRHPSRMMSLDDVFSIEELKDWYDSVIRDLDWPESKPLPMSCEVKIDGLALNLIYRNGVLEQGLTRGDGVTGEDITLNVRTIGSIPANLGGPKEDVPDFVEIRGEVFMRWDDFHTLNNEQEDAGRAPFANPRNAAAGSLRQKDPRITATRRLSFYAHGLGQLTWGADHPRGTHDVVADQSQAYDLYTRWGVPVSPHNRAVTSFQEILDMIEYYGEHRGDIEHALDGIVVKVDDLGLQRTLGATSRAPRWAIAYKYPPEEVNTELLNITVQVGRTGRVTPVAVLKPVYVAGSTVARTTLHNGFEVKRKGVLIGDTVVVRKAGDVIPELVGPVLERRKGREDQLREFVMPEFCPSCGAKLAPAKEGDKDIRCPNVESCPAQLTERVISLASRKAFDIEHLGEQSAIALTNPEENRPDSVATYAPNITEVLVAPGEEPDPYEPVEGLELPAAQKPVLSNESGLFDLTAADLRDVRVWREAAIVEVHETVGANGKKKKVRKRVGGSGLWHQVPAFWTAPTPAKKLTAKQLAERAQREAAIESAETQGGAASETTGAPTGAEAPLGTMPGFAAASYPEYDVPADAVIVRVDHKTTRTGVTDVPVIIRPGENTRKMFDEMDKARHADLWRVLVALSIRRLGPPTARLIASAMGSLAAIEKATIEDLTAIDGVGPEIAESVVNWFAATREPGDWRGATLRAWQAAGVGVDEAETSSLPQTLAGKTVVVTGSLEGYSRDSAKEAIIERGGKAAGSVSKKTDYVVIGANAGSKAIKAEELGIPMLGEIQFAQLLETGSID.

NAD(+) contacts are provided by residues 90–94 (DAAYD), 139–140 (SL), and glutamate 173. Lysine 175 (N6-AMP-lysine intermediate) is an active-site residue. NAD(+)-binding residues include arginine 196, glutamate 235, lysine 360, and lysine 384. Cysteine 481, cysteine 484, cysteine 500, and cysteine 506 together coordinate Zn(2+). A disordered region spans residues 663–688 (EAAIESAETQGGAASETTGAPTGAEA). In terms of domain architecture, BRCT spans 839 to 921 (SLPQTLAGKT…AQLLETGSID (83 aa)).

Belongs to the NAD-dependent DNA ligase family. LigA subfamily. The cofactor is Mg(2+). Requires Mn(2+) as cofactor.

The enzyme catalyses NAD(+) + (deoxyribonucleotide)n-3'-hydroxyl + 5'-phospho-(deoxyribonucleotide)m = (deoxyribonucleotide)n+m + AMP + beta-nicotinamide D-nucleotide.. DNA ligase that catalyzes the formation of phosphodiester linkages between 5'-phosphoryl and 3'-hydroxyl groups in double-stranded DNA using NAD as a coenzyme and as the energy source for the reaction. It is essential for DNA replication and repair of damaged DNA. This chain is DNA ligase, found in Bifidobacterium longum subsp. infantis (strain ATCC 15697 / DSM 20088 / JCM 1222 / NCTC 11817 / S12).